The chain runs to 243 residues: Probable transcriptional regulatory protein Smlt3713 (243 aa).

It belongs to the TACO1 family.

The protein localises to the cytoplasm. The polypeptide is Probable transcriptional regulatory protein Smlt3713 (Stenotrophomonas maltophilia (strain K279a)).